We begin with the raw amino-acid sequence, 200 residues long: Interferon lambda-1 (200 aa).

An N-terminal signal peptide occupies residues 1–19 (MAAAWTVVLVTLVLGLAVA). Asparagine 65 is a glycosylation site (N-linked (GlcNAc...) asparagine). The cysteines at positions 68 and 164 are disulfide-linked.

This sequence belongs to the lambda interferon family.

It is found in the secreted. Its function is as follows. Cytokine with antiviral, antitumour and immunomodulatory activities. Plays a critical role in the antiviral host defense, predominantly in the epithelial tissues. Acts as a ligand for the heterodimeric class II cytokine receptor composed of IL10RB and IFNLR1, and receptor engagement leads to the activation of the JAK/STAT signaling pathway resulting in the expression of IFN-stimulated genes (ISG), which mediate the antiviral state. Has a restricted receptor distribution and therefore restricted targets: is primarily active in epithelial cells and this cell type-selective action is because of the epithelial cell-specific expression of its receptor IFNLR1. Exerts an immunomodulatory effect by up-regulating MHC class I antigen expression. This Homo sapiens (Human) protein is Interferon lambda-1 (IFNL1).